The following is a 168-amino-acid chain: Phosphopantetheine adenylyltransferase (168 aa).

Thr-9 lines the substrate pocket. ATP is bound by residues 9-10 (TF) and His-17. The substrate site is built by Lys-41, Leu-73, and Arg-87. ATP-binding positions include 88 to 90 (GLR), Glu-98, and 123 to 129 (YQFISGT).

Belongs to the bacterial CoaD family. Homohexamer. Requires Mg(2+) as cofactor.

The protein localises to the cytoplasm. The catalysed reaction is (R)-4'-phosphopantetheine + ATP + H(+) = 3'-dephospho-CoA + diphosphate. Its pathway is cofactor biosynthesis; coenzyme A biosynthesis; CoA from (R)-pantothenate: step 4/5. Its function is as follows. Reversibly transfers an adenylyl group from ATP to 4'-phosphopantetheine, yielding dephospho-CoA (dPCoA) and pyrophosphate. The chain is Phosphopantetheine adenylyltransferase from Paraburkholderia phymatum (strain DSM 17167 / CIP 108236 / LMG 21445 / STM815) (Burkholderia phymatum).